Here is a 680-residue protein sequence, read N- to C-terminus: Putative E3 ubiquitin-protein ligase UNKL (680 aa).

Residues methionine 1–proline 22 form a disordered region. 4 consecutive C3H1-type zinc fingers follow at residues tyrosine 75 to threonine 104, tyrosine 115 to leucine 145, glutamine 243 to threonine 277, and proline 283 to lysine 310. Low complexity-rich tracts occupy residues threonine 326–glycine 337, valine 375–alanine 396, serine 465–serine 497, and serine 545–proline 562. Disordered regions lie at residues threonine 326–lysine 358, valine 375–proline 400, aspartate 442–serine 520, and serine 545–glutamate 566. Residues asparagine 563–alanine 619 adopt a coiled-coil conformation. The RING-type zinc finger occupies cysteine 639–lysine 674.

This sequence belongs to the unkempt family. In terms of assembly, isoform 4 (C-terminal) interacts with the GTP-bound form of RAC1. Isoform 4 (C-terminal) interacts with SMARCD2/BAF60b. In terms of processing, isoform 4 is ubiquitinated in the C-terminal. Ubiquitination is enhanced by activated RAC1. The presence of the RING finger domain is not essential for ubiquitination to occur.

It is found in the cytoplasm. The protein resides in the nucleus. The protein operates within protein modification; protein ubiquitination. In terms of biological role, may participate in a protein complex showing an E3 ligase activity regulated by RAC1. Ubiquitination is directed towards itself and possibly other substrates, such as SMARCD2/BAF60b. Intrinsic E3 ligase activity has not been proven. This chain is Putative E3 ubiquitin-protein ligase UNKL (UNKL), found in Homo sapiens (Human).